A 494-amino-acid chain; its full sequence is V-type proton ATPase subunit B (494 aa).

Belongs to the ATPase alpha/beta chains family. V-ATPase is a heteromultimeric enzyme composed of a peripheral catalytic V1 complex (main components: subunits A, B, C, D, E, and F) attached to an integral membrane V0 proton pore complex (main component: the proteolipid protein).

In terms of biological role, non-catalytic subunit of the peripheral V1 complex of vacuolar ATPase. V-ATPase is responsible for acidifying a variety of intracellular compartments in eukaryotic cells. This Plasmodium falciparum protein is V-type proton ATPase subunit B (VAPB).